Consider the following 406-residue polypeptide: MANVLDTLMERGYIKQFTHEAETRELLEKEKVTFYIGFDPTADSLHVGHFIAMMFMAHMQKAGHRPIALIGGGTATIGDPSGKTDMRKMMTNETIAHNVACIKKQMEKFIDFSDDKAILVNNADWLLNQNYVEFLREVGVHFSVNRMLSAECFKQRLERGLSFLEFNYMLMQGYDFYVLNKKYNCKMELGGDDQWSNMIAGVELVRKKSQESAYAMTCTLLTNSEGQKMGKTVNGALWLDPEKTSPYEFYQYWRNVNDADVEKCLKLLTFIPMDEVRRLSSLEGSQINEAKKVLAFEVTKLVHGEEEATKAQQAAEALFGKGGDMSNVPTYEMGKDKLGAELLDILVEAEIVPSKAEGKRLVKQGGLSLNGEKVADFKKTLEEADFENGEVLIKRGKKNYNKIVLA.

Tyr35 contacts L-tyrosine. Positions 40–49 match the 'HIGH' region motif; that stretch reads PTADSLHVGH. Residues Tyr168 and Gln172 each coordinate L-tyrosine. The short motif at 228-232 is the 'KMSKS' region element; the sequence is KMGKT. Lys231 contributes to the ATP binding site. Positions 340-404 constitute an S4 RNA-binding domain; it reads AELLDILVEA…RGKKNYNKIV (65 aa).

Belongs to the class-I aminoacyl-tRNA synthetase family. TyrS type 1 subfamily. In terms of assembly, homodimer.

It localises to the cytoplasm. The catalysed reaction is tRNA(Tyr) + L-tyrosine + ATP = L-tyrosyl-tRNA(Tyr) + AMP + diphosphate + H(+). Functionally, catalyzes the attachment of tyrosine to tRNA(Tyr) in a two-step reaction: tyrosine is first activated by ATP to form Tyr-AMP and then transferred to the acceptor end of tRNA(Tyr). This is Tyrosine--tRNA ligase from Clostridium perfringens (strain 13 / Type A).